The primary structure comprises 115 residues: Large ribosomal subunit protein bL19 (115 aa).

It belongs to the bacterial ribosomal protein bL19 family.

This protein is located at the 30S-50S ribosomal subunit interface and may play a role in the structure and function of the aminoacyl-tRNA binding site. The chain is Large ribosomal subunit protein bL19 from Bacillus pumilus (strain SAFR-032).